A 162-amino-acid chain; its full sequence is Dihydrofolate reductase (162 aa).

The region spanning 3–161 (KITIIAACAE…VAYTFVHYLG (159 aa)) is the DHFR domain. A substrate-binding site is contributed by 7 to 9 (IAA). NADP(+) is bound by residues 8–9 (AA) and 16–21 (IGAGNA). D29 contributes to the substrate binding site. NADP(+) is bound at residue 45-48 (GRKT). A substrate-binding site is contributed by R60. Residues 65-68 (ISRQ) and 98-103 (MGGAQI) each bind NADP(+). T117 lines the substrate pocket.

This sequence belongs to the dihydrofolate reductase family.

It catalyses the reaction (6S)-5,6,7,8-tetrahydrofolate + NADP(+) = 7,8-dihydrofolate + NADPH + H(+). It functions in the pathway cofactor biosynthesis; tetrahydrofolate biosynthesis; 5,6,7,8-tetrahydrofolate from 7,8-dihydrofolate: step 1/1. Functionally, key enzyme in folate metabolism. Catalyzes an essential reaction for de novo glycine and purine synthesis, and for DNA precursor synthesis. The polypeptide is Dihydrofolate reductase (folA) (Neisseria gonorrhoeae).